Here is a 480-residue protein sequence, read N- to C-terminus: Argininosuccinate lyase (480 aa).

This sequence belongs to the lyase 1 family. Argininosuccinate lyase subfamily.

It is found in the cytoplasm. The catalysed reaction is 2-(N(omega)-L-arginino)succinate = fumarate + L-arginine. The protein operates within amino-acid biosynthesis; L-arginine biosynthesis; L-arginine from L-ornithine and carbamoyl phosphate: step 3/3. The polypeptide is Argininosuccinate lyase (Ruthia magnifica subsp. Calyptogena magnifica).